Here is a 1503-residue protein sequence, read N- to C-terminus: MDSKSVTPEPTNPFYASSGQSGKTYASVVAAAAAAAADKEDGGAVSSAKELDSSSEAVSGNSDKVGADDLSDSEKEKPNLVGDGKVSDEVDGSLKEDSTTPEATPKPEVVSGETIGVDDVSSLSPKPEAVSDGVGVVEENKKVKEDVEDIKDDGESKIENGSVDVDVKQASTDGESESKVKDVEEEDVGTKKDDEGESELGGKVDVDDKSDNVIEEEGVELTDKGDVIVNSSPVESVHVDVAKPGVVVVGDAEGSEELKINADAETLEVANKFDQIGDDDSGEFEPVSDKAIEEVEEKFTSESDSIADSSKLESVDTSAVEPEVVAAESGSEPKDVEKANGLEKGMTYAEVIKAASAVADNGTKEEESVLGGIVDDAEEGVKLNNKGDFVVDSSAIEAVNVDVAKPGVVVVGDVEVSEVLETDGNIPDVHNKFDPIGQGEGGEVELESDKATEEGGGKLVSEGDSMVDSSVVDSVDADINVAEPGVVVVGAAKEAVIKEDDKDDEVDKTISNIEEPDDLTAAYDGNFELAVKEISEAAKVEPDEPKVGVEVEELPVSESLKVGSVDAEEDSIPAAESQFEVRKVVEGDSAEEDENKLPVEDIVSSREFSFGGKEVDQEPSGEGVTRVDGSESEEETEEMIFGSSEAAKQFLAELEKASSGIEAHSDEANISNNMSDRIDGQIVTDSDEDVDTEDEGEEKMFDTAALAALLKAATGGGSSEGGNFTITSQDGTKLFSMDRPAGLSSSLRPLKPAAAPRANRSNIFSNSNVTMADETEINLSEEEKQKLEKLQSLRVKFLRLLQRLGHSAEDSIAAQVLYRLALLAGRQAGQLFSLDAAKKKAVESEAEGNEELIFSLNILVLGKAGVGKSATINSILGNQIASIDAFGLSTTSVREISGTVNGVKITFIDTPGLKSAAMDQSTNAKMLSSVKKVMKKCPPDIVLYVDRLDTQTRDLNNLPLLRTITASLGTSIWKNAIVTLTHAASAPPDGPSGTPLSYDVFVAQCSHIVQQSIGQAVGDLRLMNPSLMNPVSLVENHPLCRKNREGVKVLPNGQTWRSQLLLLCYSLKVLSETNSLLRPQEPLDHRKVFGFRVRSPPLPYLLSWLLQSRAHPKLPGDQGGDSVDSDIEIDDVSDSEQEDGEDDEYDQLPPFKPLRKTQLAKLSNEQRKAYFEEYDYRVKLLQKKQWREELKRMKEMKKNGKKLGESEFGYPGEEDDPENGAPAAVPVPLPDMVLPPSFDSDNSAYRYRYLEPTSQLLTRPVLDTHGWDHDCGYDGVNAEHSLALASRFPATATVQVTKDKKEFNIHLDSSVSAKHGENGSTMAGFDIQNVGKQLAYVVRGETKFKNLRKNKTTVGGSVTFLGENIATGVKLEDQIALGKRLVLVGSTGTMRSQGDSAYGANLEVRLREADFPIGQDQSSFGLSLVKWRGDLALGANLQSQVSVGRNSKIALRAGLNNKMSGQITVRTSSSDQLQIALTAILPIAMSIYKSIRPEATNDKYSMY.

Residues 1–24 (MDSKSVTPEPTNPFYASSGQSGKT) show a composition bias toward polar residues. Positions 1–210 (MDSKSVTPEP…GGKVDVDDKS (210 aa)) are disordered. The helical transmembrane segment at 21–37 (SGKTYASVVAAAAAAAA) threads the bilayer. S71 is modified (phosphoserine). 2 stretches are compositionally biased toward basic and acidic residues: residues 85-98 (KVSDEVDGSLKEDS) and 176-210 (SESKVKDVEEEDVGTKKDDEGESELGGKVDVDDKS). S210, S281, and S288 each carry phosphoserine. 2 disordered regions span residues 298-338 (KFTS…DVEK) and 429-464 (VHNKFDPIGQGEGGEVELESDKATEEGGGKLVSEGD). Over residues 447–456 (ESDKATEEGG) the composition is skewed to basic and acidic residues. S448, S461, S589, S609, S630, S632, and S665 each carry phosphoserine. Positions 610 to 633 (FGGKEVDQEPSGEGVTRVDGSESE) are disordered. The stretch at 781–804 (EEEKQKLEKLQSLRVKFLRLLQRL) forms a coiled coil. The AIG1-type G domain maps to 853–1087 (IFSLNILVLG…RPQEPLDHRK (235 aa)). Residues 862–869 (GKAGVGKS) form a G1 region. GTP is bound by residues 865–870 (GVGKSA) and 884–889 (DAFGLS). Residue S869 coordinates Mg(2+). A homodimerization region spans residues 884-887 (DAFG). The segment at 889 to 893 (STTSV) is G2. The segment at 909–912 (DTPG) is G3. Positions 947–952 (RLDTQT) are homodimerization. The G4 stretch occupies residues 981–984 (THAA). GTP contacts are provided by residues H982 and 1035-1036 (EN). The segment at 1035–1037 (ENH) is G5. Residues 1175-1203 (DYRVKLLQKKQWREELKRMKEMKKNGKKL) are a coiled coil. Residues 1203–1222 (LGESEFGYPGEEDDPENGAP) form a disordered region.

Belongs to the TRAFAC class TrmE-Era-EngA-EngB-Septin-like GTPase superfamily. AIG1/Toc34/Toc159-like paraseptin GTPase family. TOC159 subfamily. Homodimer and heterodimer with TOC33. Part of the TOC core complex that includes 1 protein for the specific recognition of transit peptides surrounded by a ring composed of four proteins forming translocation channels, and four to five GTP-binding proteins providing energy. This core complex can interact with components of the TIC complex to form a larger import complex. Chloroplastic protein precursor such as prSS (precursor of the RuBisCO small subunit) interacts with these complexes. The TOC complex contains a specific subset of polar lipids such as digalactosyldiacylglyceride (DGDG), phosphatidylcholine (PC) and phosphatidylglycerol (PG). Interacts with SP1. Mg(2+) serves as cofactor. In terms of processing, phosphorylated by KOC1.

The protein localises to the plastid. The protein resides in the chloroplast outer membrane. It localises to the cytoplasm. In terms of biological role, GTPase involved in protein precursor import into chloroplasts. Seems to recognize chloroplast-destined precursor proteins and regulate their presentation to the translocation channel through GTP hydrolysis. Required for chloroplast biogenesis. Probably specialized in the import of nuclear encoded photosynthetic preproteins from the cytoplasm to the chloroplast. The protein is Translocase of chloroplast 159, chloroplastic of Arabidopsis thaliana (Mouse-ear cress).